Consider the following 538-residue polypeptide: Syncytin-2 (538 aa).

Residues methionine 1 to alanine 15 form the signal peptide. The Extracellular portion of the chain corresponds to alanine 16–lysine 478. A CXXC motif is present at residues cysteine 43–cysteine 46. 3 disulfide bridges follow: cysteine 43/cysteine 46, cysteine 43/cysteine 439, and cysteine 431/cysteine 438. Residues asparagine 146, asparagine 177, asparagine 220, asparagine 241, asparagine 247, asparagine 312, and asparagine 332 are each glycosylated (N-linked (GlcNAc...) asparagine). Positions leucine 354–isoleucine 374 are fusion peptide. The CKS-17 signature appears at leucine 414–isoleucine 430. The CX6CC motif lies at cysteine 431–cysteine 439. The N-linked (GlcNAc...) asparagine glycan is linked to asparagine 443. A helical transmembrane segment spans residues tryptophan 479–phenylalanine 499. Over glycine 500–phenylalanine 538 the chain is Cytoplasmic.

Belongs to the gamma type-C retroviral envelope protein family. HERV class-I FRD env subfamily. The surface and transmembrane proteins form a heterodimer. They are attached by non-covalent interactions or by a labile interchain disulfide bond. In terms of processing, specific enzymatic cleavages in vivo yield the mature SU and TM proteins. The CXXC motif is highly conserved across a broad range of retroviral envelope proteins. It is thought to participate in the formation of a labile disulfide bond possibly with the CX6CC motif present in the transmembrane protein.

It is found in the virion. The protein localises to the cell membrane. Functionally, this endogenous retroviral envelope protein has retained its original fusogenic properties and participates in trophoblast fusion and the formation of a syncytium during placenta morphogenesis. The interaction with MFSD2A is apparently important for this process. Its function is as follows. Endogenous envelope proteins may have kept, lost or modified their original function during evolution but this one can still make pseudotypes with MLV, HIV-1 or SIV-1 virions and confer infectivity. Retroviral envelope proteins mediate receptor recognition and membrane fusion during early infection. The surface protein mediates receptor recognition, while the transmembrane protein anchors the envelope heterodimer to the viral membrane through one transmembrane domain. The other hydrophobic domain, called fusion peptide, mediates fusion of the viral membrane with the target cell membrane. The sequence is that of Syncytin-2 (ERVFRD-1) from Callithrix jacchus (White-tufted-ear marmoset).